Consider the following 266-residue polypeptide: Orcokinin peptides type B (266 aa).

The first 20 residues, M1 to A20, serve as a signal peptide directing secretion. 3 propeptides span residues G21–V46, D240–D246, and N264–E266.

It belongs to the orcokinin family.

The protein resides in the secreted. Its function is as follows. Myotropic peptides that enhance both the frequency and amplitude of spontaneous hindgut contractions. This is Orcokinin peptides type B from Procambarus clarkii (Red swamp crayfish).